We begin with the raw amino-acid sequence, 891 residues long: Inter-alpha-trypsin inhibitor heavy chain H3 (891 aa).

The signal sequence occupies residues methionine 1–serine 20. A propeptide spanning residues glycine 21–serine 34 is cleaved from the precursor. In terms of domain architecture, VIT spans leucine 29 to glutamate 158. An N-linked (GlcNAc...) asparagine glycan is attached at asparagine 91. In terms of domain architecture, VWFA spans serine 284–valine 467. Aspartate 651 carries the post-translational modification Aspartate 1-(chondroitin 4-sulfate)-ester. Positions proline 652 to phenylalanine 891 are excised as a propeptide.

It belongs to the ITIH family. I-alpha-I plasma protease inhibitors are assembled from one or two heavy chains (H1, H2 or H3) and one light chain, bikunin. Inter-alpha-inhibitor (I-alpha-I) is composed of H1, H2 and bikunin, inter-alpha-like inhibitor (I-alpha-LI) of H2 and bikunin, and pre-alpha-inhibitor (P-alpha-I) of H3 and bikunin.

The protein resides in the secreted. Its function is as follows. May act as a carrier of hyaluronan in serum or as a binding protein between hyaluronan and other matrix protein, including those on cell surfaces in tissues to regulate the localization, synthesis and degradation of hyaluronan which are essential to cells undergoing biological processes. This Bos taurus (Bovine) protein is Inter-alpha-trypsin inhibitor heavy chain H3 (ITIH3).